The following is a 216-amino-acid chain: Major fimbrial subunit (216 aa).

An N-terminal signal peptide occupies residues methionine 1–alanine 20. Cysteines 41 and 81 form a disulfide.

It belongs to the fimbrial protein family.

Its subcellular location is the fimbrium. Its function is as follows. Mediates adherence to oropharyngeal epithelial cells. Helps the airway colonization process. The chain is Major fimbrial subunit (hifA) from Haemophilus influenzae.